A 598-amino-acid chain; its full sequence is MFHPYRKTLLSGTVALALGLFATGAIAAGFQPAQPAGKLGAIVVDPYGNAPLTALIELDSHTISDVKVTVHGKGEKGVPVSYSVGKQSLATYDGIPVFGLYQKHANKVTVEYTENGKAMKEDYVIQTSAIVNRYMDNRSISDLQKTKVIKVAPGFEDRLYLVNTHTFTPQGAEFHWHGEKDKNAGLLDAGPAAGALPFDIAPFTFVVDTEGEYRWWLDQDTFYDGHDMNINKRGYLMGIRETPRGTFTAVQGQHWYEFDMMGQVLADHKLPRGFLDATHESIETVNGTVLLRVGKRNYRKEDGLHVHTIRDQIIEVDKSGRVIDVWDLTKILDPLRDSLLGALDAGAVCVNVDLEHAGQQAKLEPDTPFGDALGVGAERNWAHVNPIAYDAKDDAIILSSRHQGIVKIGSDKKVKWILAPAKGWNKQLASKLLKPVDSKGNPLTCNENGKCENTDFDFSYTQHTAWLTDKGTLTVFDNGDGRWLEQPALPSMKYSRFVEYKIDEKNGTVQPLWQYGKERGYDFYSPITSVIEYQKDRDTIFGFSGSINLFEVGQPTIGKINEIDYKTKDVKVEIDVLSDKPNQTHYRALLVHPQQMFK.

The first 27 residues, 1–27 (MFHPYRKTLLSGTVALALGLFATGAIA), serve as a signal peptide directing secretion. 2 residues coordinate 4-methylumbelliferone: His-279 and His-383. Cys-445 and Cys-451 are oxidised to a cystine. Position 463 (His-463) interacts with 4-methylumbelliferone. The active-site Nucleophile; sulfurylated histidine covalent intermediate is the His-463.

This sequence belongs to the aryl sulfotransferase family. As to quaternary structure, monomer.

It localises to the periplasm. It catalyses the reaction an aryl sulfate + a phenol = an aryl sulfate + a phenol. It carries out the reaction 4-methylumbelliferone sulfate + phenol = phenyl sulfate + 4-methylumbelliferone. The enzyme catalyses 2-naphthyl sulfate + phenol = phenyl sulfate + 2-naphthol. Functionally, catalyzes the transfer of a sulfate group from a phenyl sulfate ester to other phenolic compounds. Is able to use several substrate donors and acceptors in vitro: using phenol as an acceptor substrate, 4-methylumbelliferyl sulfate is the best donor substrate, followed by beta-naphthyl sulfate, p-nitrophenyl sulfate (PNS), and alpha-naphthyl sulfate; using PNS as a donor substrate, alpha-naphthol is the best acceptor substrate, followed by phenol, resorcinol, p-acetaminophen, tyramine, and tyrosine. Cannot use 3'-phosphoadenosine-5'-phophosulfate (PAPS), the donor substrate of mammalian sulfotransferase. May be a detoxifying enzyme, converting toxic phenolic compounds into non-toxic materials. The protein is Arylsulfate sulfotransferase AssT of Lelliottia amnigena (Enterobacter amnigenus).